Consider the following 731-residue polypeptide: 1,4-alpha-glucan branching enzyme GlgB (731 aa).

A disulfide bridge links Cys-193 with Cys-617. Asp-411 (nucleophile) is an active-site residue. The Proton donor role is filled by Glu-464.

It belongs to the glycosyl hydrolase 13 family. GlgB subfamily. Monomer.

It catalyses the reaction Transfers a segment of a (1-&gt;4)-alpha-D-glucan chain to a primary hydroxy group in a similar glucan chain.. Its pathway is glycan biosynthesis; glycogen biosynthesis. It participates in capsule biogenesis; capsule polysaccharide biosynthesis. In terms of biological role, essential enzyme that catalyzes the formation of the alpha-1,6-glucosidic linkages in glucan chains by scission of a 1,4-alpha-linked oligosaccharide from growing alpha-1,4-glucan chains and the subsequent attachment of the oligosaccharide to the alpha-1,6 position. Is involved in the biosynthesis of both glycogen and capsular alpha-D-glucan. In Mycobacterium tuberculosis (strain CDC 1551 / Oshkosh), this protein is 1,4-alpha-glucan branching enzyme GlgB (glgB).